The primary structure comprises 353 residues: Quinolinate synthase (353 aa).

Residues His-49 and Ser-70 each contribute to the iminosuccinate site. Residue Cys-115 participates in [4Fe-4S] cluster binding. Iminosuccinate contacts are provided by residues 141–143 and Ser-158; that span reads YAN. Residue Cys-202 coordinates [4Fe-4S] cluster. Residues 228–230 and Thr-245 contribute to the iminosuccinate site; that span reads HPE. Cys-299 is a [4Fe-4S] cluster binding site.

This sequence belongs to the quinolinate synthase family. Type 1 subfamily. [4Fe-4S] cluster serves as cofactor.

It localises to the cytoplasm. It catalyses the reaction iminosuccinate + dihydroxyacetone phosphate = quinolinate + phosphate + 2 H2O + H(+). Its pathway is cofactor biosynthesis; NAD(+) biosynthesis; quinolinate from iminoaspartate: step 1/1. In terms of biological role, catalyzes the condensation of iminoaspartate with dihydroxyacetone phosphate to form quinolinate. In Marinobacter nauticus (strain ATCC 700491 / DSM 11845 / VT8) (Marinobacter aquaeolei), this protein is Quinolinate synthase.